A 240-amino-acid chain; its full sequence is ATP-dependent dethiobiotin synthetase BioD (240 aa).

Position 12–17 (Glu-12–Val-17) interacts with ATP. Position 16 (Thr-16) interacts with Mg(2+). The active site involves Lys-37. Residue Ser-41 coordinates substrate. Residues Asp-54, Glu-115–Gly-118, Asn-179–Gln-180, and Pro-207–Ile-209 each bind ATP. Mg(2+) is bound by residues Asp-54 and Glu-115.

Belongs to the dethiobiotin synthetase family. As to quaternary structure, homodimer. Mg(2+) serves as cofactor.

It localises to the cytoplasm. It carries out the reaction (7R,8S)-7,8-diammoniononanoate + CO2 + ATP = (4R,5S)-dethiobiotin + ADP + phosphate + 3 H(+). It functions in the pathway cofactor biosynthesis; biotin biosynthesis; biotin from 7,8-diaminononanoate: step 1/2. In terms of biological role, catalyzes a mechanistically unusual reaction, the ATP-dependent insertion of CO2 between the N7 and N8 nitrogen atoms of 7,8-diaminopelargonic acid (DAPA, also called 7,8-diammoniononanoate) to form a ureido ring. In Clostridium acetobutylicum (strain ATCC 824 / DSM 792 / JCM 1419 / IAM 19013 / LMG 5710 / NBRC 13948 / NRRL B-527 / VKM B-1787 / 2291 / W), this protein is ATP-dependent dethiobiotin synthetase BioD.